Consider the following 455-residue polypeptide: Aminopeptidase YwaD (455 aa).

Positions 1–31 (MKKLLTVMTMAVLTAGTLLLPAQSVTPAAHA) are cleaved as a signal peptide. His250, Asp262, Glu295, Asp323, and His401 together coordinate Zn(2+).

It belongs to the peptidase M28 family. M28B subfamily. Monomer. Requires Zn(2+) as cofactor.

It is found in the secreted. The enzyme catalyses Release of N-terminal Arg and Lys from oligopeptides when P1' is not Pro. Also acts on arylamides of Arg and Lys.. The catalysed reaction is Release of an N-terminal amino acid, preferentially leucine, but not glutamic or aspartic acids.. Catalyzes the hydrolysis of a range of N-terminal amino acids. This is Aminopeptidase YwaD (ywaD) from Bacillus subtilis (strain 168).